The primary structure comprises 441 residues: MSTTTESTHDGAGETLVVAGGQDWDKVVEAARSADPGERIVVNMGPQHPSTHGVLRLILEIEGETVTEARCGIGYLHTGIEKNLEYRYWTQGVTFVTRMDYLSPFFNETAYCLGVEKLLGITDQIPERVNVIRVMMMELNRISSHLVALATGGMELGAMTPMFVGFRGREIVLTLFESITGLRMNSAYIRPGGVAQDLPPNAKTEIAQALDQLRQPLREMGDLLNENAIWKARTQDIGYLDLTGCMALGITGPILRATGLPHDLRKSEPYCGYENYEFDVITADTCDAYGRYMIRVKEMWESIKIVEQCLDKLQPGPIMVENGKIAWPADLKVGPDGLGNSPEHIAKIMGGSMEALIHHFKLVTEGIRVPPGQVYTAVESPRGELGVHMVSDGGTRPYRVHYRDPSFTNLQSVAAMCEGGMVADLITAVASIDPVMGGVDR.

This sequence belongs to the complex I 49 kDa subunit family. NDH-1 is composed of 14 different subunits. Subunits NuoB, C, D, E, F, and G constitute the peripheral sector of the complex.

The protein resides in the cell membrane. It carries out the reaction a quinone + NADH + 5 H(+)(in) = a quinol + NAD(+) + 4 H(+)(out). Functionally, NDH-1 shuttles electrons from NADH, via FMN and iron-sulfur (Fe-S) centers, to quinones in the respiratory chain. The immediate electron acceptor for the enzyme in this species is believed to be a menaquinone. Couples the redox reaction to proton translocation (for every two electrons transferred, four hydrogen ions are translocated across the cytoplasmic membrane), and thus conserves the redox energy in a proton gradient. The protein is NADH-quinone oxidoreductase subunit D of Mycobacterium avium (strain 104).